A 343-amino-acid chain; its full sequence is N-acetyl-gamma-glutamyl-phosphate reductase (343 aa).

Cys-149 is a catalytic residue.

Belongs to the NAGSA dehydrogenase family. Type 1 subfamily.

It localises to the cytoplasm. The enzyme catalyses N-acetyl-L-glutamate 5-semialdehyde + phosphate + NADP(+) = N-acetyl-L-glutamyl 5-phosphate + NADPH + H(+). The protein operates within amino-acid biosynthesis; L-arginine biosynthesis; N(2)-acetyl-L-ornithine from L-glutamate: step 3/4. Functionally, catalyzes the NADPH-dependent reduction of N-acetyl-5-glutamyl phosphate to yield N-acetyl-L-glutamate 5-semialdehyde. This chain is N-acetyl-gamma-glutamyl-phosphate reductase, found in Alkalilimnicola ehrlichii (strain ATCC BAA-1101 / DSM 17681 / MLHE-1).